The chain runs to 316 residues: Protein lifeguard 2 (316 aa).

Positions 1 to 53 (MTQGKLSVANKAPGTEGQQQVHGEKKEAPAVPSAPPSYEEATSGEGMKAGAFP) are disordered. 3 helical membrane-spanning segments follow: residues 106-126 (VYTILLIQLLVTLAVVALFTF), 138-158 (PGWYWASYAVFFATYLTLACC), and 165-185 (FPWNLILLTVFTLSMAYLTGM). N-linked (GlcNAc...) asparagine glycosylation is present at Asn191. 4 helical membrane-spanning segments follow: residues 194–214 (SVLLCLGITALVCLSVTVFSF), 225–245 (GVLFVLPMTLFFSGLILAILL), 250–270 (VPWLHAVYAALGAGVFTLFLA), and 290–310 (IFGALNIYLDIIYIFTFFLQL).

This sequence belongs to the BI1 family. LFG subfamily. Interacts with FAS/TNFRSF6 and BAX.

It is found in the cell membrane. The protein resides in the membrane raft. Its subcellular location is the postsynaptic cell membrane. In terms of biological role, antiapoptotic protein which protects cells uniquely from Fas-induced apoptosis. Regulates Fas-mediated apoptosis in neurons by interfering with caspase-8 activation. Plays a role in cerebellar development by affecting cerebellar size, internal granular layer (IGL) thickness, and Purkinje cell (PC) development. The sequence is that of Protein lifeguard 2 (FAIM2) from Pongo abelii (Sumatran orangutan).